The primary structure comprises 341 residues: tRNA N6-adenosine threonylcarbamoyltransferase (341 aa).

Residues H115 and H119 each contribute to the Fe cation site. Substrate-binding positions include 137–141, D170, G183, D187, and N276; that span reads IVSGG. A Fe cation-binding site is contributed by D304.

Belongs to the KAE1 / TsaD family. Fe(2+) serves as cofactor.

The protein resides in the cytoplasm. It catalyses the reaction L-threonylcarbamoyladenylate + adenosine(37) in tRNA = N(6)-L-threonylcarbamoyladenosine(37) in tRNA + AMP + H(+). Functionally, required for the formation of a threonylcarbamoyl group on adenosine at position 37 (t(6)A37) in tRNAs that read codons beginning with adenine. Is involved in the transfer of the threonylcarbamoyl moiety of threonylcarbamoyl-AMP (TC-AMP) to the N6 group of A37, together with TsaE and TsaB. TsaD likely plays a direct catalytic role in this reaction. This chain is tRNA N6-adenosine threonylcarbamoyltransferase, found in Staphylococcus aureus (strain bovine RF122 / ET3-1).